The sequence spans 277 residues: NAD kinase (277 aa).

Catalysis depends on aspartate 55, which acts as the Proton acceptor. NAD(+)-binding positions include 55-56 (DG), 131-132 (NE), arginine 157, aspartate 159, and 170-175 (TAYNKS).

This sequence belongs to the NAD kinase family. A divalent metal cation is required as a cofactor.

It localises to the cytoplasm. It carries out the reaction NAD(+) + ATP = ADP + NADP(+) + H(+). In terms of biological role, involved in the regulation of the intracellular balance of NAD and NADP, and is a key enzyme in the biosynthesis of NADP. Catalyzes specifically the phosphorylation on 2'-hydroxyl of the adenosine moiety of NAD to yield NADP. This chain is NAD kinase, found in Streptococcus mutans serotype c (strain ATCC 700610 / UA159).